Here is a 339-residue protein sequence, read N- to C-terminus: Ketol-acid reductoisomerase (NADP(+)) (339 aa).

A KARI N-terminal Rossmann domain is found at methionine 1–threonine 182. NADP(+)-binding positions include tyrosine 24–glutamine 27, arginine 48, serine 51, threonine 53, and aspartate 83–glutamine 86. The active site involves histidine 108. Position 134 (glycine 134) interacts with NADP(+). In terms of domain architecture, KARI C-terminal knotted spans threonine 183–isoleucine 328. Mg(2+) contacts are provided by aspartate 191, glutamate 195, glutamate 227, and glutamate 231. Serine 252 provides a ligand contact to substrate.

This sequence belongs to the ketol-acid reductoisomerase family. Mg(2+) serves as cofactor.

The enzyme catalyses (2R)-2,3-dihydroxy-3-methylbutanoate + NADP(+) = (2S)-2-acetolactate + NADPH + H(+). The catalysed reaction is (2R,3R)-2,3-dihydroxy-3-methylpentanoate + NADP(+) = (S)-2-ethyl-2-hydroxy-3-oxobutanoate + NADPH + H(+). The protein operates within amino-acid biosynthesis; L-isoleucine biosynthesis; L-isoleucine from 2-oxobutanoate: step 2/4. It functions in the pathway amino-acid biosynthesis; L-valine biosynthesis; L-valine from pyruvate: step 2/4. Functionally, involved in the biosynthesis of branched-chain amino acids (BCAA). Catalyzes an alkyl-migration followed by a ketol-acid reduction of (S)-2-acetolactate (S2AL) to yield (R)-2,3-dihydroxy-isovalerate. In the isomerase reaction, S2AL is rearranged via a Mg-dependent methyl migration to produce 3-hydroxy-3-methyl-2-ketobutyrate (HMKB). In the reductase reaction, this 2-ketoacid undergoes a metal-dependent reduction by NADPH to yield (R)-2,3-dihydroxy-isovalerate. The chain is Ketol-acid reductoisomerase (NADP(+)) from Brucella suis (strain ATCC 23445 / NCTC 10510).